We begin with the raw amino-acid sequence, 756 residues long: MSWSPSLPTQTCGAWEMKERLGTGGFGNVIRWHNQETGEQIAIKQCRQELSPRNRERWCLEIQIMRRLNHPNVVAARDVPEGMQSLAPNDLPLLAMEYCQGGDLRKYLNQFENCCGLREGAILTLLSDIASALRYLHENRIIHRDLKPENIVLQQGEQRLIHKIIDLGYAKELDQGSLCTSFVGTLQYLAPELLEQQKYTVTVDYWSFGTLAFECITGFRPFLPNWQPVQWHSKVRQKSEMDIVVSEDLNGAVKFSSSLPHPNNLNSVLAQRLEKWLQLMLMWHPRQRGTDPVYGPNGCFKALDDILNLKLLHVLNMVTGTLHTYPVTEDESLQSLKARIRQDTGILEEDQELLQEAGLALIPDKPAAQCLSDGKLNEGRTLDMDLVFLFDNSRVTYESQVSPQPQPESVSCILQEPKRNLPFFQLRKVWGQVWHSIQALKEDCSRLQQGQRAAMMNLLRNNSCLSKMKNSMASMSQQLKAKLDFFKTSIQIDLEKYREQTEFGITSDKLLLAWREMEQAVELCGRENEVKHLVERMMALQTDIVDLQRSPMGRKQGGTLDDLEEQARELYRRLREKPRDQRTDGDSQEMVRLLLQAIQGFEKKVRVIYTQLSKTVVCKQKALELLPKVEEVVSLMSEDEKMVVRLQEKRQKELWNLLKIACSKVRGPVSGSPDSMNASRLSHPCQLMSQPCTAPDSLPEAAEKSEDLVAEAHTLCTQLENALQDTMKEQDQSLRSLDWSWLQSEEEEQQSLERAS.

The 286-residue stretch at 15–300 (WEMKERLGTG…DPVYGPNGCF (286 aa)) folds into the Protein kinase domain. ATP-binding positions include 21 to 29 (LGTGGFGNV) and lysine 44. The active-site Proton acceptor is the aspartate 145. A Glycyl lysine isopeptide (Lys-Gly) (interchain with G-Cter in ubiquitin) cross-link involves residue lysine 163. Phosphoserine; by TBK1 and PKC/PRKCZ is present on serine 177. The residue at position 179 (cysteine 179) is an S-nitrosocysteine. Position 181 is a phosphoserine; by TBK1, PKC/PRKCZ and PDPK1 (serine 181). Proline 191 is modified (hydroxyproline). The tract at residues 458–479 (LLRNNSCLSKMKNSMASMSQQL) is leucine-zipper. Serine 670, serine 672, serine 675, serine 682, serine 689, serine 697, serine 705, serine 733, and serine 740 each carry phosphoserine; by autocatalysis. Residues 737 to 742 (LDWSWL) are NEMO-binding.

Belongs to the protein kinase superfamily. Ser/Thr protein kinase family. I-kappa-B kinase subfamily. As to quaternary structure, component of the I-kappa-B-kinase (IKK) core complex consisting of CHUK, IKBKB and IKBKG; probably four alpha/CHUK-beta/IKBKB dimers are associated with four gamma/IKBKG subunits. The IKK core complex seems to associate with regulatory or adapter proteins to form a IKK-signalosome holo-complex. The IKK complex associates with TERF2IP/RAP1, leading to promote IKK-mediated phosphorylation of RELA/p65. Part of a complex composed of NCOA2, NCOA3, CHUK/IKKA, IKBKB, IKBKG and CREBBP. Part of a 70-90 kDa complex at least consisting of CHUK/IKKA, IKBKB, NFKBIA, RELA, ELP1 and MAP3K14. Found in a membrane raft complex, at least composed of BCL10, CARD11, DPP4 and IKBKB. Interacts with SQSTM1 through PRKCZ or PRKCI. Forms an NGF-induced complex with IKBKB, PRKCI and TRAF6. May interact with MAVS/IPS1. Interacts with NALP2. Interacts with TICAM1. Interacts with FAF1; the interaction disrupts the IKK complex formation. Interacts with ATM. Part of a ternary complex consisting of TANK, IKBKB and IKBKG. Interacts with NIBP; the interaction is direct. Interacts with ARRB1 and ARRB2. Interacts with TRIM21. Interacts with NLRC5; prevents IKBKB phosphorylation and kinase activity. Interacts with PDPK1. Interacts with EIF2AK2/PKR. The phosphorylated form interacts with PPM1A and PPM1B. Interacts with ZNF268; the interaction is further increased in a TNF-alpha-dependent manner. Interacts with IKBKE. Interacts with ZC3H12A. Interacts with AKAP13. Interacts with IFIT5; the interaction synergizes the recruitment of IKK to MAP3K7 and enhances IKK phosphorylation. Interacts with LRRC14; disrupts IKBKB-IKBKG interaction preventing I-kappa-B-kinase (IKK) core complex formation and leading to a decrease of IKBKB phosphorylation and NF-kappaB activation. Interacts with SASH1. Interacts with ARFIP2. Interacts with FKBP5. In terms of processing, upon cytokine stimulation, phosphorylated on Ser-177 and Ser-181 by MEKK1 and/or MAP3K14/NIK as well as TBK1 and PRKCZ; which enhances activity. Phosphorylated by MAP3K7/TAK1 in response to NOD1 and NOD2 signaling, promoting activation and phosphorylation of NF-kappa-B inhibitors, leading to NF-kappa-B activation. Once activated, autophosphorylates on the C-terminal serine cluster; which decreases activity and prevents prolonged activation of the inflammatory response. Phosphorylated by the IKK-related kinases TBK1 and IKBKE, which is associated with reduced CHUK/IKKA and IKBKB activity and NF-kappa-B-dependent gene transcription. Dephosphorylated at Ser-177 and Ser-181 by PPM1A and PPM1B. Post-translationally, ubiquitinated. Monoubiquitination involves TRIM21 that leads to inhibition of Tax-induced NF-kappa-B signaling. 'Ser-163' may not serve as a monoubiquitination site. Ubiquitination on 'Ser-163' may modulate phosphorylation on C-terminal serine residues. Hydroxylated by PHD1/EGLN2, loss of hydroxylation under hypoxic conditions results in activation of NF-kappa-B.

It localises to the cytoplasm. The protein resides in the nucleus. Its subcellular location is the membrane raft. It carries out the reaction L-seryl-[I-kappa-B protein] + ATP = O-phospho-L-seryl-[I-kappa-B protein] + ADP + H(+). The catalysed reaction is L-seryl-[protein] + ATP = O-phospho-L-seryl-[protein] + ADP + H(+). The enzyme catalyses L-threonyl-[protein] + ATP = O-phospho-L-threonyl-[protein] + ADP + H(+). Functionally, serine kinase that plays an essential role in the NF-kappa-B signaling pathway which is activated by multiple stimuli such as inflammatory cytokines, bacterial or viral products, DNA damages or other cellular stresses. Acts as a part of the canonical IKK complex in the conventional pathway of NF-kappa-B activation. Phosphorylates inhibitors of NF-kappa-B on 2 critical serine residues. These modifications allow polyubiquitination of the inhibitors and subsequent degradation by the proteasome. In turn, free NF-kappa-B is translocated into the nucleus and activates the transcription of hundreds of genes involved in immune response, growth control, or protection against apoptosis. In addition to the NF-kappa-B inhibitors, phosphorylates several other components of the signaling pathway including NEMO/IKBKG, NF-kappa-B subunits RELA and NFKB1, as well as IKK-related kinases TBK1 and IKBKE. IKK-related kinase phosphorylations may prevent the overproduction of inflammatory mediators since they exert a negative regulation on canonical IKKs. Phosphorylates FOXO3, mediating the TNF-dependent inactivation of this pro-apoptotic transcription factor. Also phosphorylates other substrates including NAA10, NCOA3, BCL10 and IRS1. Phosphorylates RIPK1 at 'Ser-25' which represses its kinase activity and consequently prevents TNF-mediated RIPK1-dependent cell death. Phosphorylates the C-terminus of IRF5, stimulating IRF5 homodimerization and translocation into the nucleus. In Bos taurus (Bovine), this protein is Inhibitor of nuclear factor kappa-B kinase subunit beta (IKBKB).